The chain runs to 592 residues: Outer spore wall assembly protein SHE10 (592 aa).

The first 23 residues, 1-23, serve as a signal peptide directing secretion; sequence MRFFKRFLLTLTVFIYTLRYLHC. 2 coiled-coil regions span residues 354–385 and 448–583; these read ENNISTNLTNTIDELDKNIQEIHEHHVELYEE and LNQF…KQMG. Residues 507 to 580 are compositionally biased toward basic and acidic residues; it reads QSEQEERIKS…EVRKQEEARK (74 aa). The segment at 507–592 is disordered; sequence QSEQEERIKS…GSPPPPQQQQ (86 aa).

This sequence belongs to the SHE10 family. As to quaternary structure, component of the mitochondria-localized RNase mitochondrial RNA-processing (RNase MRP) composed of one single RNA encoded by the NME1 gene and at least 31 proteins. Absent in the nucleus-localized RNase MRP (NuMRP).

Its subcellular location is the mitochondrion. In terms of biological role, involved in spore wall assembly. May be a component of the mitochondrial RNase MRP (MtMRP), a ribonucleoprotein endoribonuclease involved in the cleaving RNA transcripts to generate primers for DNA replication in mitochondria. In Vanderwaltozyma polyspora (strain ATCC 22028 / DSM 70294 / BCRC 21397 / CBS 2163 / NBRC 10782 / NRRL Y-8283 / UCD 57-17) (Kluyveromyces polysporus), this protein is Outer spore wall assembly protein SHE10.